The sequence spans 909 residues: Protein translocase subunit SecA (909 aa).

Residues Gln-87, 105–109 (GEGKT), and Asp-512 contribute to the ATP site. A disordered region spans residues 863-909 (LVGGGDEDDESIAAHTPMIRDGDKVGRNDPCPCGSGRKYKQCHGKLS). Residues 880–889 (MIRDGDKVGR) show a composition bias toward basic and acidic residues. Residues Cys-893, Cys-895, Cys-904, and His-905 each contribute to the Zn(2+) site. Residues 899–909 (RKYKQCHGKLS) are compositionally biased toward basic residues.

This sequence belongs to the SecA family. As to quaternary structure, monomer and homodimer. Part of the essential Sec protein translocation apparatus which comprises SecA, SecYEG and auxiliary proteins SecDF-YajC and YidC. Zn(2+) serves as cofactor.

The protein resides in the cell inner membrane. Its subcellular location is the cytoplasm. The enzyme catalyses ATP + H2O + cellular proteinSide 1 = ADP + phosphate + cellular proteinSide 2.. Functionally, part of the Sec protein translocase complex. Interacts with the SecYEG preprotein conducting channel. Has a central role in coupling the hydrolysis of ATP to the transfer of proteins into and across the cell membrane, serving both as a receptor for the preprotein-SecB complex and as an ATP-driven molecular motor driving the stepwise translocation of polypeptide chains across the membrane. The polypeptide is Protein translocase subunit SecA (Shewanella putrefaciens (strain CN-32 / ATCC BAA-453)).